Here is a 474-residue protein sequence, read N- to C-terminus: 3-isopropylmalate dehydratase large subunit (474 aa).

Residues cysteine 350, cysteine 415, and cysteine 418 each coordinate [4Fe-4S] cluster.

Belongs to the aconitase/IPM isomerase family. LeuC type 1 subfamily. As to quaternary structure, heterodimer of LeuC and LeuD. It depends on [4Fe-4S] cluster as a cofactor.

It carries out the reaction (2R,3S)-3-isopropylmalate = (2S)-2-isopropylmalate. The protein operates within amino-acid biosynthesis; L-leucine biosynthesis; L-leucine from 3-methyl-2-oxobutanoate: step 2/4. Functionally, catalyzes the isomerization between 2-isopropylmalate and 3-isopropylmalate, via the formation of 2-isopropylmaleate. In Phenylobacterium zucineum (strain HLK1), this protein is 3-isopropylmalate dehydratase large subunit.